A 617-amino-acid polypeptide reads, in one-letter code: Tetratricopeptide repeat protein 39B (617 aa).

TPR repeat units lie at residues 328 to 361 (SLIL…QEEW) and 561 to 594 (PFTL…YKDY).

Belongs to the TTC39 family.

Its function is as follows. Regulates high density lipoprotein (HDL) cholesterol metabolism by promoting the ubiquitination and degradation of the oxysterols receptors LXR (NR1H2 and NR1H3). The sequence is that of Tetratricopeptide repeat protein 39B (Ttc39b) from Rattus norvegicus (Rat).